The sequence spans 387 residues: Colicin-N (387 aa).

Positions 1-11 (MGSNGADNAHN) are enriched in polar residues. Residues 1–106 (MGSNGADNAH…ITITPDNSKP (106 aa)) form a disordered region. A compositionally biased stretch (gly residues) spans 14–30 (FGGGKNPGIGNTSGAGS). Residues 31–48 (NGSASSNRGNSNGWSWSN) are compositionally biased toward low complexity. Residues 78–87 (GNSGNRGNNG) show a composition bias toward gly residues. 2 helical membrane-spanning segments follow: residues 325–345 (IIGG…LSFL) and 350–370 (LAVT…SSFI).

This sequence belongs to the channel forming colicin family.

It is found in the cell membrane. Its function is as follows. This colicin is a channel-forming colicin. This class of transmembrane toxins depolarize the cytoplasmic membrane, leading to dissipation of cellular energy. Functionally, colicins are polypeptide toxins produced by and active against E.coli and closely related bacteria. The protein is Colicin-N (cna) of Escherichia coli.